Consider the following 682-residue polypeptide: Polycomb protein suz12-B (682 aa).

The disordered stretch occupies residues 326–355 (DPSDPSTAPVAKPLSTRNSDTSTTESRIST). Residues 340-354 (STRNSDTSTTESRIS) show a composition bias toward polar residues. The C2H2-type zinc-finger motif lies at 408-431 (LHCPWCTLNCRKLYSLLKHLKLSH). The tract at residues 523-599 (RLYFHSDSCM…NQMSQASMLF (77 aa)) is VEFS-box.

This sequence belongs to the VEFS (VRN2-EMF2-FIS2-SU(Z)12) family. Component of the prc2/eed-ezh2 complex.

Its subcellular location is the nucleus. Its function is as follows. Polycomb group (PcG) protein. Component of the prc2/eed-ezh2 complex, which methylates 'Lys-9' and 'Lys-27' of histone H3, leading to transcriptional repression of the affected target gene. The chain is Polycomb protein suz12-B (suz12b) from Danio rerio (Zebrafish).